Here is a 728-residue protein sequence, read N- to C-terminus: Phosphoribosylformylglycinamidine synthase subunit PurL (728 aa).

Histidine 42 is an active-site residue. 2 residues coordinate ATP: tyrosine 45 and lysine 84. Position 86 (glutamate 86) interacts with Mg(2+). Substrate is bound by residues 87–90 (SHNH) and arginine 109. The active-site Proton acceptor is histidine 88. Aspartate 110 provides a ligand contact to Mg(2+). Glutamine 237 contributes to the substrate binding site. Position 265 (aspartate 265) interacts with Mg(2+). 309–311 (ESQ) is a substrate binding site. Residues aspartate 491 and glycine 528 each coordinate ATP. Mg(2+) is bound at residue asparagine 529. Serine 531 serves as a coordination point for substrate.

The protein belongs to the FGAMS family. Monomer. Part of the FGAM synthase complex composed of 1 PurL, 1 PurQ and 2 PurS subunits.

It localises to the cytoplasm. It carries out the reaction N(2)-formyl-N(1)-(5-phospho-beta-D-ribosyl)glycinamide + L-glutamine + ATP + H2O = 2-formamido-N(1)-(5-O-phospho-beta-D-ribosyl)acetamidine + L-glutamate + ADP + phosphate + H(+). The protein operates within purine metabolism; IMP biosynthesis via de novo pathway; 5-amino-1-(5-phospho-D-ribosyl)imidazole from N(2)-formyl-N(1)-(5-phospho-D-ribosyl)glycinamide: step 1/2. Part of the phosphoribosylformylglycinamidine synthase complex involved in the purines biosynthetic pathway. Catalyzes the ATP-dependent conversion of formylglycinamide ribonucleotide (FGAR) and glutamine to yield formylglycinamidine ribonucleotide (FGAM) and glutamate. The FGAM synthase complex is composed of three subunits. PurQ produces an ammonia molecule by converting glutamine to glutamate. PurL transfers the ammonia molecule to FGAR to form FGAM in an ATP-dependent manner. PurS interacts with PurQ and PurL and is thought to assist in the transfer of the ammonia molecule from PurQ to PurL. This chain is Phosphoribosylformylglycinamidine synthase subunit PurL, found in Campylobacter jejuni subsp. jejuni serotype O:2 (strain ATCC 700819 / NCTC 11168).